Consider the following 299-residue polypeptide: Spermatocyte protein spe-11 (299 aa).

The interval 1–38 (MSDEEIDISTALNNKTTPKKKSLKRNSNSQEGYESPEE) is disordered.

In terms of tissue distribution, expressed in mature sperm.

The protein resides in the cytoplasm. It is found in the perinuclear region. In terms of biological role, paternally sperm-supplied factor required for embryogenesis. Plays a role in preventing polyspermy possibly by promoting the formation of a continuous and cohesive eggshell chitin layer. This is Spermatocyte protein spe-11 (spe-11) from Caenorhabditis elegans.